A 342-amino-acid chain; its full sequence is Inositol-tetrakisphosphate 1-kinase 1 (342 aa).

Residues Lys-28 and Lys-70 each coordinate 1D-myo-inositol 6-phosphate. ATP is bound by residues Arg-105 and Lys-155. The region spanning 116-332 (DHAADQDSTF…HKDGVGNQQE (217 aa)) is the ATP-grasp domain. 2 residues coordinate 1D-myo-inositol 6-phosphate: Gly-161 and His-166. ATP contacts are provided by His-166, Gln-187, and Val-190. Residues Lys-198 and Tyr-200 each contribute to the 1D-myo-inositol 6-phosphate site. Residue Ser-213 coordinates ATP. The segment at 219–247 (PEDDASAQGSVSFSQVSNLPTERTAEEYY) is catalytic specificity elements (CSE). Residue Asn-280 participates in 1D-myo-inositol 6-phosphate binding. Asp-282 contacts Mg(2+). Ile-296, Asp-297, and Asn-299 together coordinate ATP. Residues Asp-297 and Asn-299 each coordinate Mg(2+). The 1D-myo-inositol 6-phosphate site is built by Asn-299, Gly-303, and Lys-306.

Belongs to the ITPK1 family. As to quaternary structure, monomer. Mg(2+) is required as a cofactor. In terms of tissue distribution, expressed in the embryo of 15 day after pollination. Expressed in kernels at earlier stages but at very low levels. Expression in the embryo peaks at 15 days after pollination and then declines. No expression is detected from endosperm and vegetative tissues.

It carries out the reaction 1D-myo-inositol 3,4,5,6-tetrakisphosphate + ATP = 1D-myo-inositol 1,3,4,5,6-pentakisphosphate + ADP + H(+). It catalyses the reaction 1D-myo-inositol 1,3,4-trisphosphate + ATP = 1D-myo-inositol 1,3,4,5-tetrakisphosphate + ADP + H(+). The enzyme catalyses 1D-myo-inositol 1,3,4-trisphosphate + ATP = 1D-myo-inositol 1,3,4,6-tetrakisphosphate + ADP + H(+). The catalysed reaction is 1D-myo-inositol 1,2,3,4,5-pentakisphosphate + ATP = 3-diphospho-1D-myo-inositol 1,2,4,5-tetrakisphosphate + ADP. It carries out the reaction 1D-myo-inositol hexakisphosphate + ATP = 5-diphospho-1D-myo-inositol 1,2,3,4,6-pentakisphosphate + ADP. Its function is as follows. Kinase that can phosphorylate various inositol polyphosphate such as Ins(3,4,5,6)P4 or Ins(1,3,4)P3 and participates in phytic acid biosynthesis in developing seeds. Phosphorylates Ins(3,4,5,6)P4 at position 1 to form Ins(1,3,4,5,6)P5. This reaction is thought to have regulatory importance, since Ins(3,4,5,6)P4 is an inhibitor of plasma membrane Ca(2+)-activated Cl(-) channels, while Ins(1,3,4,5,6)P5 is not. Also phosphorylates Ins(1,3,4)P3 on O-5 and O-6 to form Ins(1,3,4,6)P4, an essential molecule in the hexakisphosphate (InsP6) pathway. Also able to phosphorylate Ins(3,5,6)P3 but not Ins(1,4,5)P3, Ins(2,4,5)P3, Ins(1,3,4,6)P4 nor Ins(1,3,5,6)P4. Has higher specific activity on Ins(3,4,5,6)P4 than Ins(1,3,4)P3 and Ins(3,5,6)P3. Can also could use Ins(1,2,5,6)P4 as a substrate. Able to add a beta-phosphate to the 3 positions of Ins(1,2,3,4,5)P5 and to add beta-phosphate to InsP6 to yield 5-InsP7, thus exhibiting InsP6 kinase activity. Also has Ins(1,3,4,5,6)P5 phosphatase activity. The chain is Inositol-tetrakisphosphate 1-kinase 1 from Zea mays (Maize).